A 144-amino-acid polypeptide reads, in one-letter code: Large ribosomal subunit protein uL13 (144 aa).

Belongs to the universal ribosomal protein uL13 family. Part of the 50S ribosomal subunit.

Its function is as follows. This protein is one of the early assembly proteins of the 50S ribosomal subunit, although it is not seen to bind rRNA by itself. It is important during the early stages of 50S assembly. The sequence is that of Large ribosomal subunit protein uL13 from Nitratidesulfovibrio vulgaris (strain DSM 19637 / Miyazaki F) (Desulfovibrio vulgaris).